The sequence spans 138 residues: Ergosterol biosynthetic protein 28 (138 aa).

Residues 17 to 33 (LPYWLLFISVVSIFNSV) form a helical membrane-spanning segment. Asparagine 40 carries an N-linked (GlcNAc...) asparagine glycan. The next 3 helical transmembrane spans lie at 56-75 (LSAR…RFYG), 87-107 (LTQF…LYFG), and 114-131 (GLSG…WMYL).

It belongs to the ERG28 family. As to quaternary structure, heterotetramer of ERG25, ERG26, ERG27 and ERG28. ERG28 acts as a scaffold to tether ERG27 and other 4,4-demethylation-related enzymes, forming a demethylation enzyme complex, in the endoplasmic reticulum. Interacts with ERG25, ERG26 and ERG27. Also interacts with ERG1, ERG3, ERG5, ERG6 and ERG11.

The protein resides in the endoplasmic reticulum membrane. Functionally, part of the third module of ergosterol biosynthesis pathway that includes the late steps of the pathway. ERG28 has a role as a scaffold to help anchor the catalytic components of the C-4 demethylation complex ERG25, ERG26 and ERG27 to the endoplasmic reticulum. The third module or late pathway involves the ergosterol synthesis itself through consecutive reactions that mainly occur in the endoplasmic reticulum (ER) membrane. Firstly, the squalene synthase ERG9 catalyzes the condensation of 2 farnesyl pyrophosphate moieties to form squalene, which is the precursor of all steroids. Squalene synthase is crucial for balancing the incorporation of farnesyl diphosphate (FPP) into sterol and nonsterol isoprene synthesis. Secondly, the squalene epoxidase ERG1 catalyzes the stereospecific oxidation of squalene to (S)-2,3-epoxysqualene, which is considered to be a rate-limiting enzyme in steroid biosynthesis. Then, the lanosterol synthase ERG7 catalyzes the cyclization of (S)-2,3 oxidosqualene to lanosterol, a reaction that forms the sterol core. In the next steps, lanosterol is transformed to zymosterol through a complex process involving various demethylation, reduction and desaturation reactions. The lanosterol 14-alpha-demethylase ERG11 (also known as CYP51) catalyzes C14-demethylation of lanosterol to produce 4,4'-dimethyl cholesta-8,14,24-triene-3-beta-ol, which is critical for ergosterol biosynthesis. The C-14 reductase ERG24 reduces the C14=C15 double bond of 4,4-dimethyl-cholesta-8,14,24-trienol to produce 4,4-dimethyl-cholesta-8,24-dienol. 4,4-dimethyl-cholesta-8,24-dienol is substrate of the C-4 demethylation complex ERG25-ERG26-ERG27 in which ERG25 catalyzes the three-step monooxygenation required for the demethylation of 4,4-dimethyl and 4alpha-methylsterols, ERG26 catalyzes the oxidative decarboxylation that results in a reduction of the 3-beta-hydroxy group at the C-3 carbon to an oxo group, and ERG27 is responsible for the reduction of the keto group on the C-3. ERG28 has a role as a scaffold to help anchor ERG25, ERG26 and ERG27 to the endoplasmic reticulum and ERG29 regulates the activity of the iron-containing C4-methylsterol oxidase ERG25. Then, the sterol 24-C-methyltransferase ERG6 catalyzes the methyl transfer from S-adenosyl-methionine to the C-24 of zymosterol to form fecosterol. The C-8 sterol isomerase ERG2 catalyzes the reaction which results in unsaturation at C-7 in the B ring of sterols and thus converts fecosterol to episterol. The sterol-C5-desaturase ERG3 then catalyzes the introduction of a C-5 double bond in the B ring to produce 5-dehydroepisterol. The C-22 sterol desaturase ERG5 further converts 5-dehydroepisterol into ergosta-5,7,22,24(28)-tetraen-3beta-ol by forming the C-22(23) double bond in the sterol side chain. Finally, ergosta-5,7,22,24(28)-tetraen-3beta-ol is substrate of the C-24(28) sterol reductase ERG4 to produce ergosterol. This is Ergosterol biosynthetic protein 28 from Candida albicans (strain SC5314 / ATCC MYA-2876) (Yeast).